A 146-amino-acid chain; its full sequence is Hemoglobin subunit beta (146 aa).

An N-acetylvaline modification is found at V1. Positions 2–146 constitute a Globin domain; the sequence is HLTGEEKAAV…VANALAHKYH (145 aa). A Phosphothreonine modification is found at T12. S44 carries the phosphoserine modification. K59 is modified (N6-acetyllysine). Residue H63 participates in heme b binding. N6-acetyllysine is present on K82. H92 is a heme b binding site. C93 bears the S-nitrosocysteine mark. An N6-acetyllysine modification is found at K144.

Belongs to the globin family. Heterotetramer of two alpha chains and two beta chains. Red blood cells.

Its function is as follows. Involved in oxygen transport from the lung to the various peripheral tissues. This chain is Hemoglobin subunit beta (HBB), found in Mustela putorius furo (European domestic ferret).